The following is a 547-amino-acid chain: Probable bifunctional tRNA threonylcarbamoyladenosine biosynthesis protein (547 aa).

The tract at residues methionine 1–tryptophan 329 is kae1. 3 residues coordinate Fe cation: histidine 113, histidine 117, and tyrosine 134. L-threonylcarbamoyladenylate contacts are provided by residues tyrosine 134–alanine 138, aspartate 166, glycine 179, glutamate 183, and asparagine 262. Aspartate 290 is a binding site for Fe cation. One can recognise a Protein kinase domain in the interval glutamate 340–alanine 547. ATP contacts are provided by residues leucine 355–isoleucine 363 and lysine 377. Aspartate 464 acts as the Proton acceptor; for kinase activity in catalysis.

It in the N-terminal section; belongs to the KAE1 / TsaD family. The protein in the C-terminal section; belongs to the protein kinase superfamily. Tyr protein kinase family. BUD32 subfamily. Component of the KEOPS complex that consists of Kae1, Bud32, Cgi121 and Pcc1; the whole complex dimerizes. Fe(2+) is required as a cofactor.

It is found in the cytoplasm. The enzyme catalyses L-seryl-[protein] + ATP = O-phospho-L-seryl-[protein] + ADP + H(+). It carries out the reaction L-threonyl-[protein] + ATP = O-phospho-L-threonyl-[protein] + ADP + H(+). It catalyses the reaction L-threonylcarbamoyladenylate + adenosine(37) in tRNA = N(6)-L-threonylcarbamoyladenosine(37) in tRNA + AMP + H(+). Functionally, required for the formation of a threonylcarbamoyl group on adenosine at position 37 (t(6)A37) in tRNAs that read codons beginning with adenine. Is a component of the KEOPS complex that is probably involved in the transfer of the threonylcarbamoyl moiety of threonylcarbamoyl-AMP (TC-AMP) to the N6 group of A37. The Kae1 domain likely plays a direct catalytic role in this reaction. The Bud32 domain probably displays kinase activity that regulates Kae1 function. This is Probable bifunctional tRNA threonylcarbamoyladenosine biosynthesis protein from Methanosarcina acetivorans (strain ATCC 35395 / DSM 2834 / JCM 12185 / C2A).